The following is a 178-amino-acid chain: Bifunctional protein PyrR (178 aa).

The PRPP-binding motif lies at 99–111; it reads VVLVDDVIFKGRT.

Belongs to the purine/pyrimidine phosphoribosyltransferase family. PyrR subfamily.

It catalyses the reaction UMP + diphosphate = 5-phospho-alpha-D-ribose 1-diphosphate + uracil. Its function is as follows. Regulates the transcription of the pyrimidine nucleotide (pyr) operon in response to exogenous pyrimidines. Also displays a weak uracil phosphoribosyltransferase activity which is not physiologically significant. This chain is Bifunctional protein PyrR, found in Nostoc punctiforme (strain ATCC 29133 / PCC 73102).